The following is a 394-amino-acid chain: Acetyl-CoA acetyltransferase (394 aa).

The active-site Acyl-thioester intermediate is Cys89. Residues His350 and Cys380 each act as proton acceptor in the active site.

Belongs to the thiolase-like superfamily. Thiolase family. As to quaternary structure, homotetramer.

The protein resides in the cytoplasm. It carries out the reaction 2 acetyl-CoA = acetoacetyl-CoA + CoA. Its pathway is biopolymer metabolism; poly-(R)-3-hydroxybutanoate biosynthesis. The protein operates within metabolic intermediate biosynthesis; (R)-mevalonate biosynthesis; (R)-mevalonate from acetyl-CoA: step 1/3. The sequence is that of Acetyl-CoA acetyltransferase from Thiocystis violacea.